The sequence spans 230 residues: MAKKGKKYQEAASKVDRTQHYSVEEAIKLAKETSIANFDASVEVAFRLGIDTRKNDQQIRGAVVLPNGTGKSQSVLVFAKGDKIAEAEAAGTDYVGEAEYVQKIQQGWFDFDVVVATPDMMGEVGKLGRVLGPKGLMPNPKTGTVTMDVKKAVEEIKAGKVEYRAEKAGIVHASIGKVSFTDEQLIENFNTLQDVLAKAKPSSAKGTYFKSVAVTTTMGPGVKIDTASFK.

It belongs to the universal ribosomal protein uL1 family. As to quaternary structure, part of the 50S ribosomal subunit.

Its function is as follows. Binds directly to 23S rRNA. The L1 stalk is quite mobile in the ribosome, and is involved in E site tRNA release. Protein L1 is also a translational repressor protein, it controls the translation of the L11 operon by binding to its mRNA. The sequence is that of Large ribosomal subunit protein uL1 from Staphylococcus aureus (strain N315).